The following is a 90-amino-acid chain: Phaiodotoxin (90 aa).

The signal sequence occupies residues 1–18; that stretch reads MKTIPLLFLLFIYFECDG. The region spanning 19–90 is the LCN-type CS-alpha/beta domain; that stretch reads KFIRHKDESF…CFGALESKCA (72 aa). Cystine bridges form between Cys31-Cys56, Cys41-Cys68, Cys45-Cys70, and Cys81-Cys89.

In terms of tissue distribution, expressed by the venom gland.

Its subcellular location is the secreted. In terms of biological role, sodium channel (Nav) specific neurotoxin. Causes impairment of movement and mild paralysis in crickets at a dose of 0.5 ug per animal. A dose of 0.8 ug per cricket causes clear flaccid paralysis. A dose of 1.0 ug per cricket causes death within 2 hours. Is not toxic to mice at a dose of 100 ug per 20 g mouse weight. This chain is Phaiodotoxin, found in Anuroctonus phaiodactylus (Mafia scorpion).